The following is a 275-amino-acid chain: Polyamine aminopropyltransferase (275 aa).

The PABS domain maps to 2-235; the sequence is DLWLREGQIE…GFWSFTIGSK (234 aa). Glutamine 31 contributes to the S-methyl-5'-thioadenosine binding site. Residues histidine 62 and aspartate 86 each coordinate spermidine. Residues glutamate 106 and 137–138 each bind S-methyl-5'-thioadenosine; that span reads DG. The active-site Proton acceptor is aspartate 155. 155–158 is a spermidine binding site; the sequence is DSTD.

Belongs to the spermidine/spermine synthase family. As to quaternary structure, homodimer or homotetramer.

The protein resides in the cytoplasm. It carries out the reaction S-adenosyl 3-(methylsulfanyl)propylamine + putrescine = S-methyl-5'-thioadenosine + spermidine + H(+). It participates in amine and polyamine biosynthesis; spermidine biosynthesis; spermidine from putrescine: step 1/1. Catalyzes the irreversible transfer of a propylamine group from the amino donor S-adenosylmethioninamine (decarboxy-AdoMet) to putrescine (1,4-diaminobutane) to yield spermidine. The polypeptide is Polyamine aminopropyltransferase (Clostridium kluyveri (strain NBRC 12016)).